A 545-amino-acid chain; its full sequence is Glucose-6-phosphate isomerase (545 aa).

E351 (proton donor) is an active-site residue. Catalysis depends on residues H382 and K510.

Belongs to the GPI family.

It localises to the cytoplasm. The enzyme catalyses alpha-D-glucose 6-phosphate = beta-D-fructose 6-phosphate. Its pathway is carbohydrate biosynthesis; gluconeogenesis. It participates in carbohydrate degradation; glycolysis; D-glyceraldehyde 3-phosphate and glycerone phosphate from D-glucose: step 2/4. Its function is as follows. Catalyzes the reversible isomerization of glucose-6-phosphate to fructose-6-phosphate. In Shewanella denitrificans (strain OS217 / ATCC BAA-1090 / DSM 15013), this protein is Glucose-6-phosphate isomerase.